The following is a 348-amino-acid chain: D-alanine--D-alanine ligase (348 aa).

One can recognise an ATP-grasp domain in the interval 132–334 (KRVLESIGIP…YPDLIEELVT (203 aa)). 162–217 (LARLTFPIFVKPANMGSSVGISKAQTKVELRKAIQLALTYDSRVLIEQGVVAREIE) is an ATP binding site. The Mg(2+) site is built by Asp288, Glu301, and Asn303.

Belongs to the D-alanine--D-alanine ligase family. It depends on Mg(2+) as a cofactor. The cofactor is Mn(2+).

The protein localises to the cytoplasm. The enzyme catalyses 2 D-alanine + ATP = D-alanyl-D-alanine + ADP + phosphate + H(+). The protein operates within cell wall biogenesis; peptidoglycan biosynthesis. In terms of biological role, cell wall formation. This chain is D-alanine--D-alanine ligase, found in Streptococcus pyogenes serotype M3 (strain SSI-1).